A 1036-amino-acid polypeptide reads, in one-letter code: Vacuolar basic amino acid transporter VSB1 (1036 aa).

Over 1–213 (MGRTIRRRRS…SKFAHYLPAA (213 aa)) the chain is Vacuolar. A phosphoserine mark is found at Ser-42 and Ser-127. Thr-130 is modified (phosphothreonine). 5 positions are modified to phosphoserine: Ser-140, Ser-144, Ser-149, Ser-152, and Ser-153. Residues 214-234 (VLGLLLNILDALSYGMIIFPI) form a helical membrane-spanning segment. Topologically, residues 235 to 236 (TE) are cytoplasmic. Residues 237–257 (PVFSHLGPTGISMFYISTIIS) form a helical membrane-spanning segment. At 258–269 (QAVYSGGWSSFP) the chain is on the vacuolar side. Residues 270–290 (SGIGSEMIEITPFYHTMALAI) traverse the membrane as a helical segment. At 291 to 300 (KEALAGNDDE) the chain is on the cytoplasmic side. The chain crosses the membrane as a helical span at residues 301–321 (IITTTIFCYVISSMLTGVVFY). The Vacuolar portion of the chain corresponds to 322–338 (ALGKLRLGKIVGFFPRH). A helical transmembrane segment spans residues 339-359 (ILIGCIGGVGYFLIITGIEVT). The Cytoplasmic segment spans residues 360–375 (TRVAKFEYSWPFFSGL). The chain crosses the membrane as a helical span at residues 376 to 396 (FTDYDTLAKWLLPVLLTVVLI). Residues 397-405 (GTQRYFKNS) lie on the Vacuolar side of the membrane. A helical membrane pass occupies residues 406–426 (LVLPSFYILTLVLFHFIVAII). Topologically, residues 427 to 473 (PTLSLDALRQAGWIFPIANSDSKWYDHYRLFNVHKVHWSLVLQQIPT) are cytoplasmic. Residues 474–494 (MMALTFFGILHVPINVPALAM) form a helical membrane-spanning segment. Over 495 to 515 (SLQMDKYDVDRELIAHGYSNF) the chain is Vacuolar. Residues 516–536 (FSGLLGSVQNYLVYTNSVLFI) form a helical membrane-spanning segment. Topologically, residues 537–546 (RAGADSPFAG) are cytoplasmic. Residues 547 to 567 (FLLIALTICIMIIGPVIISFI) traverse the membrane as a helical segment. A topological domain (vacuolar) is located at residue Pro-568. A helical membrane pass occupies residues 569 to 589 (ICIVGSLIFLLGYELLVEALV). The Cytoplasmic portion of the chain corresponds to 590–604 (DTWNKLNRFEYLTVV). A helical membrane pass occupies residues 605–625 (IIVFTMGIFDFVLGIIVGILI). Over 626–664 (ACFSFLVDSTKLQTINGEYNGNVARSTVYRDYVQTKFLD) the chain is Vacuolar. Residues 660–781 (TKFLDGIGEQ…ADLNSALEWC (122 aa)) enclose the STAS domain. A helical membrane pass occupies residues 665–685 (GIGEQIYVLKLQNLLFFGTII). Residues 686–1036 (SIEEKIERLL…ELLGYTLVSA (351 aa)) are Cytoplasmic-facing. A Phosphoserine modification is found at Ser-842. At Thr-847 the chain carries Phosphothreonine.

It localises to the vacuole membrane. Functionally, amino acid transporter involved in vacuolar uptake of basic amino acids for storage during nitrogen replete condititions. May function as an amino acid/proton antiporter. The chain is Vacuolar basic amino acid transporter VSB1 from Saccharomyces cerevisiae (strain ATCC 204508 / S288c) (Baker's yeast).